A 118-amino-acid polypeptide reads, in one-letter code: V-type proton ATPase subunit G 2 (118 aa).

Residues 23 to 91 (ADARKRKARR…QGMQSSQQRN (69 aa)) form a disordered region. Residues 35–55 (QAKEEAQMEVEQYRREREQEF) are compositionally biased toward basic and acidic residues. Composition is skewed to polar residues over residues 56–69 (QSKQ…QGNL) and 78–89 (RRQVQGMQSSQQ).

This sequence belongs to the V-ATPase G subunit family. As to quaternary structure, V-ATPase is a heteromultimeric enzyme made up of two complexes: the ATP-hydrolytic V1 complex and the proton translocation V0 complex. The V1 complex consists of three catalytic AB heterodimers that form a heterohexamer, three peripheral stalks each consisting of EG heterodimers, one central rotor including subunits D and F, and the regulatory subunits C and H. The proton translocation complex V0 consists of the proton transport subunit a, a ring of proteolipid subunits c9c'', rotary subunit d, subunits e and f, and the accessory subunits ATP6AP1/Ac45 and ATP6AP2/PRR.

The protein resides in the melanosome. It is found in the cytoplasmic vesicle. Its subcellular location is the clathrin-coated vesicle membrane. Functionally, subunit of the V1 complex of vacuolar(H+)-ATPase (V-ATPase), a multisubunit enzyme composed of a peripheral complex (V1) that hydrolyzes ATP and a membrane integral complex (V0) that translocates protons. V-ATPase is responsible for acidifying and maintaining the pH of intracellular compartments and in some cell types, is targeted to the plasma membrane, where it is responsible for acidifying the extracellular environment. The protein is V-type proton ATPase subunit G 2 (Atp6v1g2) of Mus musculus (Mouse).